We begin with the raw amino-acid sequence, 140 residues long: PDZ domain-containing protein 11 (140 aa).

A PDZ domain is found at 47 to 129 (TVVLKKPPGA…ITMRVRYFPY (83 aa)).

It is found in the cytoplasm. The protein is PDZ domain-containing protein 11 (PDZD11) of Gallus gallus (Chicken).